The sequence spans 192 residues: Ion-translocating oxidoreductase complex subunit B (192 aa).

Positions 1–26 (MTAIWIAIAALSALALAFGLVLGYAS) are hydrophobic. The 4Fe-4S domain occupies 32–91 (ENDPIVEEVEAMLPQSQCGQCGYPGCRPYAEAVSLNGESINKCGPGGEAMMLKLAEKLNV). Residues C49, C52, C57, C74, C117, C120, C123, C127, C147, C150, C153, and C157 each coordinate [4Fe-4S] cluster. 4Fe-4S ferredoxin-type domains are found at residues 108 to 137 (HVAW…GSTK) and 138 to 167 (AVHT…LRPI).

It belongs to the 4Fe4S bacterial-type ferredoxin family. RnfB subfamily. In terms of assembly, the complex is composed of six subunits: RnfA, RnfB, RnfC, RnfD, RnfE and RnfG. It depends on [4Fe-4S] cluster as a cofactor.

The protein localises to the cell inner membrane. Part of a membrane-bound complex that couples electron transfer with translocation of ions across the membrane. In Pectobacterium atrosepticum (strain SCRI 1043 / ATCC BAA-672) (Erwinia carotovora subsp. atroseptica), this protein is Ion-translocating oxidoreductase complex subunit B.